Reading from the N-terminus, the 236-residue chain is Phosphoribosylaminoimidazole-succinocarboxamide synthase (236 aa).

Belongs to the SAICAR synthetase family.

It carries out the reaction 5-amino-1-(5-phospho-D-ribosyl)imidazole-4-carboxylate + L-aspartate + ATP = (2S)-2-[5-amino-1-(5-phospho-beta-D-ribosyl)imidazole-4-carboxamido]succinate + ADP + phosphate + 2 H(+). Its pathway is purine metabolism; IMP biosynthesis via de novo pathway; 5-amino-1-(5-phospho-D-ribosyl)imidazole-4-carboxamide from 5-amino-1-(5-phospho-D-ribosyl)imidazole-4-carboxylate: step 1/2. The protein is Phosphoribosylaminoimidazole-succinocarboxamide synthase (purC) of Rickettsia prowazekii (strain Madrid E).